The primary structure comprises 92 residues: Small ribosomal subunit protein uS19 (92 aa).

This sequence belongs to the universal ribosomal protein uS19 family.

Protein S19 forms a complex with S13 that binds strongly to the 16S ribosomal RNA. This chain is Small ribosomal subunit protein uS19, found in Streptococcus pyogenes serotype M49 (strain NZ131).